We begin with the raw amino-acid sequence, 299 residues long: Protease HtpX homolog (299 aa).

The next 2 membrane-spanning stretches (helical) occupy residues 15 to 35 and 39 to 59; these read ILLL…GYLF and GLGG…SMIF. Histidine 143 is a Zn(2+) binding site. Glutamate 144 is an active-site residue. Residue histidine 147 participates in Zn(2+) binding. 2 consecutive transmembrane segments (helical) span residues 158–178 and 198–218; these read IAVA…RMMW and IIML…ATLV. Zn(2+) is bound at residue glutamate 227.

Belongs to the peptidase M48B family. Zn(2+) is required as a cofactor.

Its subcellular location is the cell membrane. The protein is Protease HtpX homolog of Streptococcus pneumoniae serotype 19F (strain G54).